The sequence spans 142 residues: Hemoglobin subunit beta-1 (142 aa).

One can recognise a Globin domain in the interval 2 to 142 (SLTDEEIRLI…VTEALSCQYH (141 aa)). Positions 59 and 88 each coordinate heme b.

Belongs to the globin family. As to quaternary structure, heterotetramer of two alpha chains and two beta chains. In terms of tissue distribution, red blood cells.

In terms of biological role, involved in oxygen transport from the lung to the various peripheral tissues. This chain is Hemoglobin subunit beta-1 (HBB1), found in Torpedo marmorata (Marbled electric ray).